The primary structure comprises 359 residues: MTKQVLVELGERSYPIVIGQKLLSNGEPLARYLKNKNILIVTNETIAPLYLEKVQAMLSDFSCVTPVILPDGEQYKTLSQMDSIFTSLLQQNLGRDTVLIALGGGVIGDMTGFAAASYQRGIDFIQIPTTLLSQVDSSVGGKTAVNHPLGKNMIGAFYQPKYVLIDTDCLSTLPKREFAAGMAEVIKYGIMWDAEFFSWLEDNVEALKALDTHALEYAIGRCCEIKADVVEKDETEQAVRALLNLGHTFGHAIEAEMGYGVWLHGEAVSAGTVLAAITSNKLGLVEESIVCRITALFAAFDLPTSAPETMNFEQFIKHMRRDKKVLKGQLRLVLPEGLGRAGIYSNVTDEQLQEVIDCA.

NAD(+) contacts are provided by residues aspartate 71–lysine 76, glycine 105–aspartate 109, threonine 129–threonine 130, lysine 142, lysine 151, and cysteine 169–threonine 172. Residues glutamate 184, histidine 247, and histidine 264 each coordinate Zn(2+).

Belongs to the sugar phosphate cyclases superfamily. Dehydroquinate synthase family. The cofactor is Co(2+). Zn(2+) is required as a cofactor. NAD(+) serves as cofactor.

Its subcellular location is the cytoplasm. It carries out the reaction 7-phospho-2-dehydro-3-deoxy-D-arabino-heptonate = 3-dehydroquinate + phosphate. Its pathway is metabolic intermediate biosynthesis; chorismate biosynthesis; chorismate from D-erythrose 4-phosphate and phosphoenolpyruvate: step 2/7. Functionally, catalyzes the conversion of 3-deoxy-D-arabino-heptulosonate 7-phosphate (DAHP) to dehydroquinate (DHQ). This is 3-dehydroquinate synthase from Shewanella piezotolerans (strain WP3 / JCM 13877).